Here is a 256-residue protein sequence, read N- to C-terminus: MNNFRQCALCIGTSVLILLVSGCSGVFDTPEDSKETQIKKSFAKTLDMYPIKNLEDLYDKEGYRDGEFKKDDKGMWTIYTDFAKSNKSDELDDEGMVLNLDRNTRTAKGYYFVKKFYEKDKFSDRKNYKVEMKNNKIILLDKVNDPNLKERIENFKFFGQYANFKDLENYNNGDVSINWNVPSYDVEYKMSNKDENVKQLRSRYNIPTDKAPMLKMHIDGDLKGSSVGYKRLEIDFSKEDRDISVIDYLSYKPAKK.

Positions 1–22 (MNNFRQCALCIGTSVLILLVSG) are cleaved as a signal peptide. Cys-23 is lipidated: N-palmitoyl cysteine. The S-diacylglycerol cysteine moiety is linked to residue Cys-23.

The protein belongs to the staphylococcal tandem lipoprotein family.

The protein resides in the cell membrane. This is an uncharacterized protein from Staphylococcus aureus (strain bovine RF122 / ET3-1).